The chain runs to 253 residues: Peptidase inhibitor R3HDML (253 aa).

An N-terminal signal peptide occupies residues 1–23 (MPLLSSIVGLTGLLLWMGHTVGA). Positions 24–56 (LRMPNTTLVQGRPKNTAVWPLSGLGVPRHRRKR) are excised as a propeptide. N-linked (GlcNAc...) asparagine glycosylation is found at Asn28 and Asn120. The region spanning 67-207 (LDYHNHIRAS…QQAVYLVCNY (141 aa)) is the SCP domain.

This sequence belongs to the CRISP family.

It localises to the secreted. Putative serine protease inhibitor. This is Peptidase inhibitor R3HDML (R3hdml) from Mus musculus (Mouse).